A 234-amino-acid chain; its full sequence is Ribose-5-phosphate isomerase A (234 aa).

Substrate contacts are provided by residues 39–42 (TGST), 92–95 (DGAD), and 105–108 (KGGG). Glutamate 114 functions as the Proton acceptor in the catalytic mechanism. Lysine 132 contributes to the substrate binding site.

This sequence belongs to the ribose 5-phosphate isomerase family. As to quaternary structure, homodimer.

It catalyses the reaction aldehydo-D-ribose 5-phosphate = D-ribulose 5-phosphate. Its pathway is carbohydrate degradation; pentose phosphate pathway; D-ribose 5-phosphate from D-ribulose 5-phosphate (non-oxidative stage): step 1/1. Functionally, catalyzes the reversible conversion of ribose-5-phosphate to ribulose 5-phosphate. The sequence is that of Ribose-5-phosphate isomerase A from Albidiferax ferrireducens (strain ATCC BAA-621 / DSM 15236 / T118) (Rhodoferax ferrireducens).